The sequence spans 175 residues: Crossover junction endodeoxyribonuclease RuvC (175 aa).

Active-site residues include aspartate 16, glutamate 76, and aspartate 148. Aspartate 16, glutamate 76, and aspartate 148 together coordinate Mg(2+).

It belongs to the RuvC family. In terms of assembly, homodimer which binds Holliday junction (HJ) DNA. The HJ becomes 2-fold symmetrical on binding to RuvC with unstacked arms; it has a different conformation from HJ DNA in complex with RuvA. In the full resolvosome a probable DNA-RuvA(4)-RuvB(12)-RuvC(2) complex forms which resolves the HJ. Mg(2+) is required as a cofactor.

Its subcellular location is the cytoplasm. The catalysed reaction is Endonucleolytic cleavage at a junction such as a reciprocal single-stranded crossover between two homologous DNA duplexes (Holliday junction).. Its function is as follows. The RuvA-RuvB-RuvC complex processes Holliday junction (HJ) DNA during genetic recombination and DNA repair. Endonuclease that resolves HJ intermediates. Cleaves cruciform DNA by making single-stranded nicks across the HJ at symmetrical positions within the homologous arms, yielding a 5'-phosphate and a 3'-hydroxyl group; requires a central core of homology in the junction. The consensus cleavage sequence is 5'-(A/T)TT(C/G)-3'. Cleavage occurs on the 3'-side of the TT dinucleotide at the point of strand exchange. HJ branch migration catalyzed by RuvA-RuvB allows RuvC to scan DNA until it finds its consensus sequence, where it cleaves and resolves the cruciform DNA. The protein is Crossover junction endodeoxyribonuclease RuvC of Bradyrhizobium sp. (strain ORS 278).